A 247-amino-acid chain; its full sequence is NAD-dependent protein deacetylase (247 aa).

The Deacetylase sirtuin-type domain maps to 1–244; the sequence is MIYEKVAEEL…PKILENVRQK (244 aa). NAD(+) contacts are provided by Ala22, Thr26, Phe33, Arg34, Gln98, Ile100, Asp101, and His116. Residue Phe33 participates in nicotinamide binding. Nicotinamide is bound by residues Ile100 and Asp101. His116 acts as the Proton acceptor in catalysis. Residues Cys124, Cys127, Cys149, and Cys151 each contribute to the Zn(2+) site. NAD(+) contacts are provided by Ser187, Ser188, Asn212, and Val230.

Belongs to the sirtuin family. Class U subfamily. In terms of assembly, monomer. It depends on Zn(2+) as a cofactor.

The protein resides in the cytoplasm. The enzyme catalyses N(6)-acetyl-L-lysyl-[protein] + NAD(+) + H2O = 2''-O-acetyl-ADP-D-ribose + nicotinamide + L-lysyl-[protein]. NAD-dependent protein deacetylase which modulates the activities of several enzymes which are inactive in their acetylated form. Deacetylates the N-terminal lysine residue of albA1, the major archaeal DNA compaction protein and that, in turn, increases albA1's DNA binding affinity, thereby repressing transcription. This Saccharolobus solfataricus (strain ATCC 35092 / DSM 1617 / JCM 11322 / P2) (Sulfolobus solfataricus) protein is NAD-dependent protein deacetylase.